The primary structure comprises 394 residues: Elongation factor Tu (394 aa).

A tr-type G domain is found at 10–204; that stretch reads KPHVNVGTIG…ALDTYIPEPE (195 aa). A G1 region spans residues 19–26; it reads GHVDHGKT. Residue 19 to 26 participates in GTP binding; that stretch reads GHVDHGKT. A Mg(2+)-binding site is contributed by T26. The interval 60 to 64 is G2; sequence GITIN. Positions 81-84 are G3; the sequence is DCPG. GTP is bound by residues 81-85 and 136-139; these read DCPGH and NKCD. Positions 136–139 are G4; the sequence is NKCD. A G5 region spans residues 174–176; that stretch reads SAL.

This sequence belongs to the TRAFAC class translation factor GTPase superfamily. Classic translation factor GTPase family. EF-Tu/EF-1A subfamily. Monomer.

Its subcellular location is the cytoplasm. The catalysed reaction is GTP + H2O = GDP + phosphate + H(+). Its function is as follows. GTP hydrolase that promotes the GTP-dependent binding of aminoacyl-tRNA to the A-site of ribosomes during protein biosynthesis. In Colwellia psychrerythraea (strain 34H / ATCC BAA-681) (Vibrio psychroerythus), this protein is Elongation factor Tu.